Consider the following 266-residue polypeptide: MILVIDVGNSHTVTGLYDHGKLIGHWRLKTDRDRTSDELAIRYHGLFIMEGIDPRQITDIVLASVVPTLSSAWIRCCERHFGKHLNQPVMDLSVTKLAPLVRVETDNPHEVGIDRLVNAYGAWHTRKTDLIVIDFGTAITFDCVTSDCVYIGGVILPGIAISLDALATRTAKLPMVDVRDVPSSLIGKNTVHAMQSGILYGYGAMVDGIVEGIQKEMLGGKRRAEVIATGGMANLIEPFTTTIEHIDKLLTLDAMELILHALKKKQ.

6-13 (DVGNSHTV) provides a ligand contact to ATP. Position 112 to 115 (112 to 115 (GIDR)) interacts with substrate. Asp114 serves as the catalytic Proton acceptor. Asp134 provides a ligand contact to K(+). Thr137 serves as a coordination point for ATP. Thr190 contributes to the substrate binding site.

Belongs to the type III pantothenate kinase family. Homodimer. NH4(+) is required as a cofactor. It depends on K(+) as a cofactor.

The protein resides in the cytoplasm. It catalyses the reaction (R)-pantothenate + ATP = (R)-4'-phosphopantothenate + ADP + H(+). It functions in the pathway cofactor biosynthesis; coenzyme A biosynthesis; CoA from (R)-pantothenate: step 1/5. In terms of biological role, catalyzes the phosphorylation of pantothenate (Pan), the first step in CoA biosynthesis. This chain is Type III pantothenate kinase, found in Desulfotalea psychrophila (strain LSv54 / DSM 12343).